A 144-amino-acid chain; its full sequence is Cytochrome c oxidase subunit 4 isoform 1, mitochondrial (144 aa).

The Mitochondrial matrix segment spans residues 1–73 (SVVKSEDYAL…SFAEMNRGSN (73 aa)). Lys-4 is modified (N6-acetyllysine; alternate). Position 4 is an N6-succinyllysine; alternate (Lys-4). 2 positions are modified to phosphoserine: Ser-31 and Ser-33. At Lys-35 the chain carries N6-acetyllysine; alternate. Lys-35 is modified (N6-succinyllysine; alternate). Residue Lys-42 is modified to N6-acetyllysine. The chain crosses the membrane as a helical span at residues 74-99 (EWKTVVGAAMFFIGFTAILIILEKRY). At 100–144 (VYGPLPHTFDKEWVAMQTKRMLDLKVNPVDGLASKWDYDKKEWKK) the chain is on the mitochondrial intermembrane side.

Belongs to the cytochrome c oxidase IV family. In terms of assembly, component of the cytochrome c oxidase (complex IV, CIV), a multisubunit enzyme composed of 14 subunits. The complex is composed of a catalytic core of 3 subunits MT-CO1, MT-CO2 and MT-CO3, encoded in the mitochondrial DNA, and 11 supernumerary subunits COX4I, COX5A, COX5B, COX6A, COX6B, COX6C, COX7A, COX7B, COX7C, COX8 and NDUFA4, which are encoded in the nuclear genome. The complex exists as a monomer or a dimer and forms supercomplexes (SCs) in the inner mitochondrial membrane with NADH-ubiquinone oxidoreductase (complex I, CI) and ubiquinol-cytochrome c oxidoreductase (cytochrome b-c1 complex, complex III, CIII), resulting in different assemblies (supercomplex SCI(1)III(2)IV(1) and megacomplex MCI(2)III(2)IV(2)). Interacts with PHB2; the interaction decreases in absence of SPHK2. Interacts with AFG1L. Interacts with ABCB7; this interaction allows the regulation of cellular iron homeostasis and cellular reactive oxygen species (ROS) levels in cardiomyocytes. Interacts with FLVCR2; this interaction occurs in the absence of heme and is disrupted upon heme binding. Interacts with IRGC.

Its subcellular location is the mitochondrion inner membrane. Its pathway is energy metabolism; oxidative phosphorylation. Component of the cytochrome c oxidase, the last enzyme in the mitochondrial electron transport chain which drives oxidative phosphorylation. The respiratory chain contains 3 multisubunit complexes succinate dehydrogenase (complex II, CII), ubiquinol-cytochrome c oxidoreductase (cytochrome b-c1 complex, complex III, CIII) and cytochrome c oxidase (complex IV, CIV), that cooperate to transfer electrons derived from NADH and succinate to molecular oxygen, creating an electrochemical gradient over the inner membrane that drives transmembrane transport and the ATP synthase. Cytochrome c oxidase is the component of the respiratory chain that catalyzes the reduction of oxygen to water. Electrons originating from reduced cytochrome c in the intermembrane space (IMS) are transferred via the dinuclear copper A center (CU(A)) of subunit 2 and heme A of subunit 1 to the active site in subunit 1, a binuclear center (BNC) formed by heme A3 and copper B (CU(B)). The BNC reduces molecular oxygen to 2 water molecules using 4 electrons from cytochrome c in the IMS and 4 protons from the mitochondrial matrix. This is Cytochrome c oxidase subunit 4 isoform 1, mitochondrial (COX4I1) from Aotus azarae (Azara's night monkey).